The primary structure comprises 401 residues: tRNA (guanine-N(7)-)-methyltransferase non-catalytic subunit wuho (401 aa).

Residues 45–85 are disordered; sequence KGRPRKYFDADSDSDEEQQNGDEPGTGKNNGGGDTGKKDQD. The span at 54–64 shows a compositional bias: acidic residues; the sequence is ADSDSDEEQQN. 3 WD repeats span residues 86–125, 174–213, and 217–255; these read DQTN…RTLK, GHMS…NIET, and GHTE…ELAR.

The protein belongs to the WD repeat TRM82 family. In terms of assembly, forms a heterodimer with the catalytic subunit.

It is found in the nucleus. It participates in tRNA modification; N(7)-methylguanine-tRNA biosynthesis. Required for the formation of N(7)-methylguanine at position 46 (m7G46) in tRNA. In the complex, it is required to stabilize and induce conformational changes of the catalytic subunit. This chain is tRNA (guanine-N(7)-)-methyltransferase non-catalytic subunit wuho, found in Culex quinquefasciatus (Southern house mosquito).